We begin with the raw amino-acid sequence, 138 residues long: Large ribosomal subunit protein uL16 (138 aa).

The protein belongs to the universal ribosomal protein uL16 family. As to quaternary structure, part of the 50S ribosomal subunit.

Its function is as follows. Binds 23S rRNA and is also seen to make contacts with the A and possibly P site tRNAs. The protein is Large ribosomal subunit protein uL16 of Rhodospirillum rubrum (strain ATCC 11170 / ATH 1.1.1 / DSM 467 / LMG 4362 / NCIMB 8255 / S1).